The chain runs to 476 residues: Aspartyl/glutamyl-tRNA(Asn/Gln) amidotransferase subunit B (476 aa).

It belongs to the GatB/GatE family. GatB subfamily. Heterotrimer of A, B and C subunits.

The enzyme catalyses L-glutamyl-tRNA(Gln) + L-glutamine + ATP + H2O = L-glutaminyl-tRNA(Gln) + L-glutamate + ADP + phosphate + H(+). The catalysed reaction is L-aspartyl-tRNA(Asn) + L-glutamine + ATP + H2O = L-asparaginyl-tRNA(Asn) + L-glutamate + ADP + phosphate + 2 H(+). Allows the formation of correctly charged Asn-tRNA(Asn) or Gln-tRNA(Gln) through the transamidation of misacylated Asp-tRNA(Asn) or Glu-tRNA(Gln) in organisms which lack either or both of asparaginyl-tRNA or glutaminyl-tRNA synthetases. The reaction takes place in the presence of glutamine and ATP through an activated phospho-Asp-tRNA(Asn) or phospho-Glu-tRNA(Gln). The polypeptide is Aspartyl/glutamyl-tRNA(Asn/Gln) amidotransferase subunit B (Clostridium botulinum (strain Loch Maree / Type A3)).